Reading from the N-terminus, the 265-residue chain is Aquaporin-5 (265 aa).

The Cytoplasmic segment spans residues M1–K12. The chain crosses the membrane as a helical span at residues A13–L33. Residues K34 to M39 lie on the Extracellular side of the membrane. A helical transmembrane segment spans residues P40 to L60. The Cytoplasmic portion of the chain corresponds to G61–G65. Residues G66–L74 constitute an intramembrane region (discontinuously helical). The NPA 1 signature appears at N69–A71. Residues A75–A87 lie on the Cytoplasmic side of the membrane. The helical transmembrane segment at V88–L108 threads the bilayer. Topologically, residues A109–T126 are extracellular. N-linked (GlcNAc...) asparagine glycans are attached at residues N124 and N125. A helical transmembrane segment spans residues T127 to F147. At S148–V158 the chain is on the cytoplasmic side. The chain crosses the membrane as a helical span at residues G159–F179. A topological domain (extracellular) is located at residue T180. The discontinuously helical intramembrane region spans G181–G191. The short motif at N185–A187 is the NPA 2 element. Residues P192 to H203 are Extracellular-facing. Residues W204 to L224 traverse the membrane as a helical segment. Residues L225–H265 are Cytoplasmic-facing.

This sequence belongs to the MIP/aquaporin (TC 1.A.8) family. In terms of assembly, homotetramer; each monomer provides an independent water pore. Interacts with TRPV4; the interaction is probably indirect and regulates TRPV4 activation by hypotonicity.

It localises to the apical cell membrane. It is found in the cell membrane. The protein localises to the cytoplasmic vesicle membrane. It carries out the reaction H2O(in) = H2O(out). Aquaporins form homotetrameric transmembrane channels, with each monomer independently mediating water transport across the plasma membrane along its osmotic gradient. Plays an important role in fluid secretion in salivary glands. Required for TRPV4 activation by hypotonicity. Together with TRPV4, controls regulatory volume decrease in salivary epithelial cells. Seems to play a redundant role in water transport in the eye, lung and in sweat glands. The chain is Aquaporin-5 from Ovis aries (Sheep).